Reading from the N-terminus, the 327-residue chain is Phenylalanine--tRNA ligase alpha subunit (327 aa).

E252 contributes to the Mg(2+) binding site.

The protein belongs to the class-II aminoacyl-tRNA synthetase family. Phe-tRNA synthetase alpha subunit type 1 subfamily. In terms of assembly, tetramer of two alpha and two beta subunits. It depends on Mg(2+) as a cofactor.

It localises to the cytoplasm. It catalyses the reaction tRNA(Phe) + L-phenylalanine + ATP = L-phenylalanyl-tRNA(Phe) + AMP + diphosphate + H(+). The sequence is that of Phenylalanine--tRNA ligase alpha subunit from Photorhabdus laumondii subsp. laumondii (strain DSM 15139 / CIP 105565 / TT01) (Photorhabdus luminescens subsp. laumondii).